The following is a 234-amino-acid chain: Uridylate kinase (234 aa).

9-10 (GS) provides a ligand contact to ATP. Residue glycine 43 coordinates UMP. Residues glycine 44 and arginine 48 each coordinate ATP. Residues aspartate 65 and 113–119 (VIPGQTT) contribute to the UMP site. Residues threonine 139, tyrosine 145, and aspartate 148 each contribute to the ATP site.

This sequence belongs to the UMP kinase family. As to quaternary structure, homohexamer.

The protein resides in the cytoplasm. It catalyses the reaction UMP + ATP = UDP + ADP. Its pathway is pyrimidine metabolism; CTP biosynthesis via de novo pathway; UDP from UMP (UMPK route): step 1/1. Its activity is regulated as follows. Inhibited by UTP. Catalyzes the reversible phosphorylation of UMP to UDP. The protein is Uridylate kinase of Methanococcoides burtonii (strain DSM 6242 / NBRC 107633 / OCM 468 / ACE-M).